We begin with the raw amino-acid sequence, 288 residues long: Probable syndecan (288 aa).

The signal sequence occupies residues 1–26; the sequence is MILKLNFCLSTYSVLILLSLSTQAFA. The Extracellular segment spans residues 27 to 231; sequence ANQAKTKVVP…ETLANGFYAA (205 aa). Residues 67–175 form a disordered region; it reads EVNGSGYPTD…NIHNDEDFFT (109 aa). N-linked (GlcNAc...) asparagine glycosylation is present at asparagine 69. O-linked (Xyl...) (glycosaminoglycan) serine glycosylation is found at serine 71 and serine 86. The segment covering 89–104 has biased composition (polar residues); the sequence is PPSSATTKSDKVTSPS. A compositionally biased stretch (low complexity) spans 106-124; the sequence is AVVTAKPTTVPTTTASFKP. The span at 141–164 shows a compositional bias: acidic residues; that stretch reads VEEDEDDDEDEDEDDEDDEEDFAD. Serine 214 carries an O-linked (Xyl...) (glycosaminoglycan) serine glycan. A helical membrane pass occupies residues 232–252; that stretch reads IAGGVLVAVITAILLVLFVVF. Over 253–288 the chain is Cytoplasmic; sequence RIRKKDEGSYALDEPKQARPYASYGYTKASTKEFYA.

Belongs to the syndecan proteoglycan family.

It localises to the membrane. The protein localises to the cell surface. It is found in the cell junction. Its subcellular location is the cytoplasm. Its function is as follows. Cell surface proteoglycan that bears heparan sulfate. Required for correct mitotic spindle orientation of the ABar blastomere division plane and this may be through modulation of astral microtubule array, and in association with the wnt-signaling proteins mig-5 and dsh-2. Involved in the migration of AQR and PQR neurons, which descend from the Q neuroblasts. Promotes the axon guidance of D-type motor neurons. This is Probable syndecan from Caenorhabditis elegans.